The chain runs to 667 residues: MDDTTYKPKNILITGAAGFIASHVANRLIRNYPDYKIVVLDKLDYCSDLKNLDPSFSSPNFKFVKGDIASDDLVNYLLITENIDTIMHFAAQTHVDNSFGNSFEFTKNNIYGTHVLLEACKVTGQIRRFIHVSTDEVYGETDEDAAVGNHEASQLLPTNPYSATKAGAEMLVMAYGRSYGLPVITTRGNNVYGPNQFPEKMIPKFILLAMSGKPLPIHGDGSNVRSYLYCEDVAEAFEVVLHKGEIGHVYNVGTKRERRVIDVARDICKLFGKDPESSIQFVENRPFNDQRYFLDDQKLKKLGWQERTNWEDGLKKTMDWYTQNPEWWGDVSGALLPHPRMLMMPGGRLSDGSSEKKDVSSNTVQTFTVVTPKNGDSGDKASLKFLIYGKTGWLGGLLGKLCEKQGITYEYGKGRLEDRASLVADIRSIKPTHVFNAAGLTGRPNVDWCESHKPETIRVNVAGTLTLADVCRENDLLMMNFATGCIFEYDATHPEGSGIGFKEEDKPNFFGSFYSKTKAMVEELLREFDNVCTLRVRMPISSDLNNPRNFITKISRYNKVVDIPNSMTVLDELLPISIEMAKRNLRGIWNFTNPGVVSHNEILEMYKNYIEPGFKWSNFTVEEQAKVIVAARSNNEMDGSKLSKEFPEMLSIKESLLKYVFEPNKRT.

Position 15–21 (15–21) interacts with NAD(+); it reads GAAGFIA. Thr-134 lines the substrate pocket. The Proton donor role is filled by Asp-135. Catalysis depends on proton acceptor residues Glu-136 and Tyr-161. An NADP(+)-binding site is contributed by 389-395; that stretch reads GKTGWLG.

The protein in the N-terminal section; belongs to the NAD(P)-dependent epimerase/dehydratase family. dTDP-glucose dehydratase subfamily. It in the C-terminal section; belongs to the dTDP-4-dehydrorhamnose reductase family. NAD(+) serves as cofactor. NADP(+) is required as a cofactor. In terms of tissue distribution, expressed in roots, stems, leaves, seedlings, inflorescence tips, and siliques.

It catalyses the reaction UDP-alpha-D-glucose = UDP-4-dehydro-6-deoxy-alpha-D-glucose + H2O. The protein operates within carbohydrate biosynthesis. Functionally, trifunctional enzyme involved in UDP-beta-L-rhamnose biosynthesis, a precursor of the primary cell wall components rhamnogalacturonan I (RG-I) and rhamnogalacturonan II (RG-II). Catalyzes the dehydration of UDP-glucose to form UDP-4-dehydro-6-deoxy-D-glucose followed by the epimerization of the C3' and C5' positions of UDP-4-dehydro-6-deoxy-D-glucose to form UDP-4-keto-beta-L-rhamnose and the reduction of UDP-4-keto-beta-L-rhamnose to yield UDP-beta-L-rhamnose. Required for the normal seed coat epidermal development. This Arabidopsis thaliana (Mouse-ear cress) protein is Trifunctional UDP-glucose 4,6-dehydratase/UDP-4-keto-6-deoxy-D-glucose 3,5-epimerase/UDP-4-keto-L-rhamnose-reductase RHM2.